A 357-amino-acid polypeptide reads, in one-letter code: NmrA-like family domain-containing oxidoreductase notA' (357 aa).

NADP(+)-binding positions include 13–18 (GATGAQ), 39–43 (RKPES), 60–61 (DG), 81–83 (TNS), K140, and 164–167 (YMDV).

Belongs to the NmrA-type oxidoreductase family.

NmrA-like family domain-containing oxidoreductase; part of the gene cluster that mediates the biosynthesis of notoamide, a fungal indole alkaloid that belongs to a family of natural products containing a characteristic bicyclo[2.2.2]diazaoctane core. The first step of notoamide biosynthesis involves coupling of L-proline and L-tryptophan by the bimodular NRPS notE', to produce cyclo-L-tryptophan-L-proline called brevianamide F. The reverse prenyltransferase notF' then acts as a deoxybrevianamide E synthase and converts brevianamide F to deoxybrevianamide E via reverse prenylation at C-2 of the indole ring leading to the bicyclo[2.2.2]diazaoctane core. Deoxybrevianamide E is further hydroxylated at C-6 of the indole ring, likely catalyzed by the cytochrome P450 monooxygenase notG', to yield 6-hydroxy-deoxybrevianamide E. 6-hydroxy-deoxybrevianamide E is a specific substrate of the prenyltransferase notC' for normal prenylation at C-7 to produce 6-hydroxy-7-prenyl-deoxybrevianamide, also called notoamide S. As the proposed pivotal branching point in notoamide biosynthesis, notoamide S can be diverted to notoamide E through an oxidative pyran ring closure putatively catalyzed by either notH' cytochrome P450 monooxygenase or the notD' FAD-linked oxidoreductase. This step would be followed by an indole 2,3-epoxidation-initiated pinacol-like rearrangement catalyzed by the notB' FAD-dependent monooxygenase leading to the formation of notoamide C and notoamide D. On the other hand notoamide S is converted to notoamide T by notH' (or notD'), a bifunctional oxidase that also functions as the intramolecular Diels-Alderase responsible for generation of (-)-notoamide T. To generate antipodal (+)-notoaminide T, notH (or notD) in Aspergillus strain MF297-2 is expected to catalyze a Diels-Alder reaction leading to the opposite stereochemistry. The remaining oxidoreductase notD' (or notH') likely catalyzes the oxidative pyran ring formation to yield (-)-stephacidin A. The FAD-dependent monooxygenase notI' is highly similar to notB' and is predicted to catalyze a similar conversion from (-)-stephacidin A to (+)-notoamide B via the 2,3-epoxidation of (-)-stephacidin A followed by a pinacol-type rearrangement. Finally, it remains unclear which enzyme could be responsible for the final hydroxylation steps leading to notoamide A and sclerotiamide. This chain is NmrA-like family domain-containing oxidoreductase notA', found in Aspergillus versicolor.